Reading from the N-terminus, the 517-residue chain is DNA-binding protein (517 aa).

A compositionally biased stretch (polar residues) spans methionine 1–serine 10. Residues methionine 1–arginine 110 form a disordered region. Over residues valine 64–asparagine 80 the composition is skewed to low complexity. The segment covering proline 87–histidine 96 has biased composition (basic residues). Tyrosine 180 carries the post-translational modification Phosphotyrosine; by host. Residues cysteine 269 and histidine 271 each contribute to the Zn(2+) site. Residues isoleucine 282–leucine 316 are flexible loop. Cysteine 324, cysteine 340, cysteine 382, cysteine 384, cysteine 436, and cysteine 453 together coordinate Zn(2+). Positions valine 501–phenylalanine 517 are C-terminal arm, DBP binding.

It belongs to the adenoviridae E2A DNA-binding protein family. In terms of assembly, homomultimerizes on viral ssDNA bound to pTP. Forms a initiation complex with viral polymerase, pTP and hosts NFIA and POU2F1/OCT1. Interacts with host SRCAP.

The protein resides in the host nucleus. Functionally, plays a role in the elongation phase of viral strand displacement replication by unwinding the template in an ATP-independent fashion, employing its capacity to form multimers. Also enhances the rate of initiation. Released from template upon second strand synthesis. Assembles in complex with viral pTP, viral pol, host NFIA and host POU2F1/OCT1 on viral origin of replication. Covers the whole ssDNA genome during synthesis. The complementary strand synthesis induces its relese from DNA template. May inhibit cellular transcription mediated by the interaction between host SRCAP and CBP. The polypeptide is DNA-binding protein (Human adenovirus B serotype 7 (HAdV-7)).